Reading from the N-terminus, the 227-residue chain is NAD(P)H-quinone oxidoreductase subunit K, chloroplastic (227 aa).

[4Fe-4S] cluster contacts are provided by cysteine 43, cysteine 44, cysteine 108, and cysteine 139.

It belongs to the complex I 20 kDa subunit family. As to quaternary structure, NDH is composed of at least 16 different subunits, 5 of which are encoded in the nucleus. Requires [4Fe-4S] cluster as cofactor.

The protein resides in the plastid. It is found in the chloroplast thylakoid membrane. It catalyses the reaction a plastoquinone + NADH + (n+1) H(+)(in) = a plastoquinol + NAD(+) + n H(+)(out). The catalysed reaction is a plastoquinone + NADPH + (n+1) H(+)(in) = a plastoquinol + NADP(+) + n H(+)(out). Functionally, NDH shuttles electrons from NAD(P)H:plastoquinone, via FMN and iron-sulfur (Fe-S) centers, to quinones in the photosynthetic chain and possibly in a chloroplast respiratory chain. It has NADH- and deamino-NADH-specific dehydrogenase activity, using ferricyanide or quinones as acceptors. The immediate electron acceptor for the enzyme in this species is believed to be plastoquinone. Couples the redox reaction to proton translocation, and thus conserves the redox energy in a proton gradient. The polypeptide is NAD(P)H-quinone oxidoreductase subunit K, chloroplastic (Pisum sativum (Garden pea)).